A 416-amino-acid chain; its full sequence is UDP-N-acetylglucosamine 1-carboxyvinyltransferase (416 aa).

22–23 (KN) is a binding site for phosphoenolpyruvate. Residue Arg92 coordinates UDP-N-acetyl-alpha-D-glucosamine. Residue Cys116 is the Proton donor of the active site. 2-(S-cysteinyl)pyruvic acid O-phosphothioketal is present on Cys116. Residues 121–125 (RPVDQ), Asp304, and Ile326 contribute to the UDP-N-acetyl-alpha-D-glucosamine site.

This sequence belongs to the EPSP synthase family. MurA subfamily.

It is found in the cytoplasm. It catalyses the reaction phosphoenolpyruvate + UDP-N-acetyl-alpha-D-glucosamine = UDP-N-acetyl-3-O-(1-carboxyvinyl)-alpha-D-glucosamine + phosphate. It participates in cell wall biogenesis; peptidoglycan biosynthesis. In terms of biological role, cell wall formation. Adds enolpyruvyl to UDP-N-acetylglucosamine. The polypeptide is UDP-N-acetylglucosamine 1-carboxyvinyltransferase (Cupriavidus metallidurans (strain ATCC 43123 / DSM 2839 / NBRC 102507 / CH34) (Ralstonia metallidurans)).